We begin with the raw amino-acid sequence, 389 residues long: 3-ketoacyl-CoA thiolase (389 aa).

The Acyl-thioester intermediate role is filled by C91. Active-site proton acceptor residues include H343 and C373.

It belongs to the thiolase-like superfamily. Thiolase family. As to quaternary structure, heterotetramer of two alpha chains (FadB) and two beta chains (FadA).

Its subcellular location is the cytoplasm. The enzyme catalyses an acyl-CoA + acetyl-CoA = a 3-oxoacyl-CoA + CoA. It functions in the pathway lipid metabolism; fatty acid beta-oxidation. Functionally, catalyzes the final step of fatty acid oxidation in which acetyl-CoA is released and the CoA ester of a fatty acid two carbons shorter is formed. This chain is 3-ketoacyl-CoA thiolase, found in Pseudoalteromonas translucida (strain TAC 125).